Consider the following 122-residue polypeptide: Large ribosomal subunit protein uL14 (122 aa).

This sequence belongs to the universal ribosomal protein uL14 family. In terms of assembly, part of the 50S ribosomal subunit. Forms a cluster with proteins L3 and L19. In the 70S ribosome, L14 and L19 interact and together make contacts with the 16S rRNA in bridges B5 and B8.

Binds to 23S rRNA. Forms part of two intersubunit bridges in the 70S ribosome. The chain is Large ribosomal subunit protein uL14 from Alteromonas mediterranea (strain DSM 17117 / CIP 110805 / LMG 28347 / Deep ecotype).